A 165-amino-acid polypeptide reads, in one-letter code: Cyclic pyranopterin monophosphate synthase (165 aa).

Substrate is bound by residues 83 to 85 and 120 to 121; these read FCH and ME. Aspartate 135 is a catalytic residue.

It belongs to the MoaC family. Homohexamer; trimer of dimers.

It catalyses the reaction (8S)-3',8-cyclo-7,8-dihydroguanosine 5'-triphosphate = cyclic pyranopterin phosphate + diphosphate. The protein operates within cofactor biosynthesis; molybdopterin biosynthesis. Its function is as follows. Catalyzes the conversion of (8S)-3',8-cyclo-7,8-dihydroguanosine 5'-triphosphate to cyclic pyranopterin monophosphate (cPMP). The sequence is that of Cyclic pyranopterin monophosphate synthase from Xanthomonas campestris pv. campestris (strain 8004).